Reading from the N-terminus, the 319-residue chain is Thioredoxin reductase (319 aa).

36–43 (TGTNKGGQ) provides a ligand contact to FAD. The cysteines at positions 136 and 139 are disulfide-linked. 288 to 297 (DVIDHVYRQA) is a binding site for FAD.

The protein belongs to the class-II pyridine nucleotide-disulfide oxidoreductase family. In terms of assembly, homodimer. The cofactor is FAD.

Its subcellular location is the cytoplasm. It catalyses the reaction [thioredoxin]-dithiol + NADP(+) = [thioredoxin]-disulfide + NADPH + H(+). The protein is Thioredoxin reductase (trxB) of Buchnera aphidicola subsp. Acyrthosiphon pisum (strain APS) (Acyrthosiphon pisum symbiotic bacterium).